The sequence spans 297 residues: tRNA pseudouridine synthase B (297 aa).

Residue Asp41 is the Nucleophile of the active site.

Belongs to the pseudouridine synthase TruB family. Type 1 subfamily.

It catalyses the reaction uridine(55) in tRNA = pseudouridine(55) in tRNA. Responsible for synthesis of pseudouridine from uracil-55 in the psi GC loop of transfer RNAs. In Synechococcus sp. (strain CC9311), this protein is tRNA pseudouridine synthase B.